We begin with the raw amino-acid sequence, 212 residues long: 3-isopropylmalate dehydratase small subunit (212 aa).

Belongs to the LeuD family. LeuD type 1 subfamily. In terms of assembly, heterodimer of LeuC and LeuD.

It catalyses the reaction (2R,3S)-3-isopropylmalate = (2S)-2-isopropylmalate. It functions in the pathway amino-acid biosynthesis; L-leucine biosynthesis; L-leucine from 3-methyl-2-oxobutanoate: step 2/4. Catalyzes the isomerization between 2-isopropylmalate and 3-isopropylmalate, via the formation of 2-isopropylmaleate. In Dechloromonas aromatica (strain RCB), this protein is 3-isopropylmalate dehydratase small subunit.